We begin with the raw amino-acid sequence, 395 residues long: ATP phosphoribosyltransferase regulatory subunit (395 aa).

Belongs to the class-II aminoacyl-tRNA synthetase family. HisZ subfamily. Heteromultimer composed of HisG and HisZ subunits.

The protein resides in the cytoplasm. Its pathway is amino-acid biosynthesis; L-histidine biosynthesis; L-histidine from 5-phospho-alpha-D-ribose 1-diphosphate: step 1/9. Required for the first step of histidine biosynthesis. May allow the feedback regulation of ATP phosphoribosyltransferase activity by histidine. In Pseudomonas syringae pv. tomato (strain ATCC BAA-871 / DC3000), this protein is ATP phosphoribosyltransferase regulatory subunit.